A 105-amino-acid chain; its full sequence is Large ribosomal subunit protein uL24 (105 aa).

It belongs to the universal ribosomal protein uL24 family. As to quaternary structure, part of the 50S ribosomal subunit.

Its function is as follows. One of two assembly initiator proteins, it binds directly to the 5'-end of the 23S rRNA, where it nucleates assembly of the 50S subunit. In terms of biological role, one of the proteins that surrounds the polypeptide exit tunnel on the outside of the subunit. This is Large ribosomal subunit protein uL24 from Mycobacterium sp. (strain JLS).